We begin with the raw amino-acid sequence, 193 residues long: DNA dC-&gt;dU-editing enzyme APOBEC-3H (193 aa).

Residues 24-126 enclose the CMP/dCMP-type deaminase domain; sequence YRRKTYLCYQ…WKYQQGLRHL (103 aa). Histidine 54 contributes to the Zn(2+) binding site. Residue glutamate 56 is the Proton donor of the active site. 2 residues coordinate Zn(2+): cysteine 85 and cysteine 88.

This sequence belongs to the cytidine and deoxycytidylate deaminase family. As to quaternary structure, homodimer. The cofactor is Zn(2+). Expressed in peripheral blood mononuclear cells.

It localises to the cytoplasm. The catalysed reaction is a 2'-deoxycytidine in single-stranded DNA + H2O + H(+) = a 2'-deoxyuridine in single-stranded DNA + NH4(+). Functionally, DNA deaminase (cytidine deaminase) which acts as an inhibitor of retrovirus replication and retrotransposon mobility via deaminase-dependent and -independent mechanisms. Selectively targets single-stranded DNA and does not deaminate double-stranded DNA or single- or double-stranded RNA. Exhibits single-stranded DNA deaminase activity (in vitro). Incorporates into the released virions of the virion infectivity factor (vif)-deficient feline immunodeficiency virus (FIV) and suppresses FIV infectivity, probably in a deaminase-dependent manner (in vitro). Induces G-to-A hypermutations in vif-deficient FIV (in vitro). The APOBEC3H/APOBEC3Z3 haplotype 5 exhibits antiviral activity against vif-proficient FIV, strains Petaluma, C36 and Shizuoka (in vitro). Does not exhibit inhibitory activity against feline leukemia virus (FeLV), feline endogenous retrovirus (RD-114 virus) or a long interspersed nuclear element-1 (LINE-1) retrotransposon (in vitro). In Felis catus (Cat), this protein is DNA dC-&gt;dU-editing enzyme APOBEC-3H.